The sequence spans 551 residues: Hydroxylamine reductase (551 aa).

[2Fe-2S] cluster contacts are provided by cysteine 3, cysteine 6, cysteine 18, and cysteine 25. The hybrid [4Fe-2O-2S] cluster site is built by histidine 249, glutamate 273, cysteine 317, cysteine 405, cysteine 433, cysteine 458, glutamate 492, and lysine 494. Position 405 is a cysteine persulfide (cysteine 405).

The protein belongs to the HCP family. It depends on [2Fe-2S] cluster as a cofactor. Hybrid [4Fe-2O-2S] cluster is required as a cofactor.

It localises to the cytoplasm. The catalysed reaction is A + NH4(+) + H2O = hydroxylamine + AH2 + H(+). Catalyzes the reduction of hydroxylamine to form NH(3) and H(2)O. The chain is Hydroxylamine reductase from Edwardsiella ictaluri (strain 93-146).